The sequence spans 369 residues: Anhydro-N-acetylmuramic acid kinase (369 aa).

12–19 contacts ATP; that stretch reads GTSMDGVD.

The protein belongs to the anhydro-N-acetylmuramic acid kinase family.

It catalyses the reaction 1,6-anhydro-N-acetyl-beta-muramate + ATP + H2O = N-acetyl-D-muramate 6-phosphate + ADP + H(+). Its pathway is amino-sugar metabolism; 1,6-anhydro-N-acetylmuramate degradation. The protein operates within cell wall biogenesis; peptidoglycan recycling. Catalyzes the specific phosphorylation of 1,6-anhydro-N-acetylmuramic acid (anhMurNAc) with the simultaneous cleavage of the 1,6-anhydro ring, generating MurNAc-6-P. Is required for the utilization of anhMurNAc either imported from the medium or derived from its own cell wall murein, and thus plays a role in cell wall recycling. The polypeptide is Anhydro-N-acetylmuramic acid kinase (Shewanella woodyi (strain ATCC 51908 / MS32)).